The chain runs to 280 residues: Cytochrome bc1 complex cytochrome c subunit (280 aa).

A helical membrane pass occupies residues 25-45 (LSGGVLLLIALTIAGGLAAVL). 2 Cytochrome c domains span residues 60-140 (ALLR…QANG) and 161-239 (NDLG…KVAT). Residues Cys73, Cys76, His77, Cys174, Cys177, and His178 each coordinate heme c. Residues 258-278 (GMAMWIIGMVAAIGLALWIGA) form a helical membrane-spanning segment.

The cytochrome bc1 complex is composed of a cytochrome b (QcrB), the Rieske iron-sulfur protein (QcrA) and a diheme cytochrome c (QcrC) subunit. Binds 2 heme c groups covalently per subunit.

Its subcellular location is the cell membrane. The catalysed reaction is a quinol + 2 Fe(III)-[cytochrome c](out) = a quinone + 2 Fe(II)-[cytochrome c](out) + 2 H(+)(out). Cytochrome b subunit of the cytochrome bc1 complex, an essential component of the respiratory electron transport chain required for ATP synthesis. The bc1 complex catalyzes the oxidation of ubiquinol and the reduction of cytochrome c in the respiratory chain. The bc1 complex operates through a Q-cycle mechanism that couples electron transfer to generation of the proton gradient that drives ATP synthesis. In Mycobacterium bovis (strain ATCC BAA-935 / AF2122/97), this protein is Cytochrome bc1 complex cytochrome c subunit (qcrC).